A 446-amino-acid polypeptide reads, in one-letter code: Indoleacetamide hydrolase (446 aa).

Active-site charge relay system residues include Lys71 and Ser146. Ser170 functions as the Acyl-ester intermediate in the catalytic mechanism.

The protein belongs to the amidase family.

Its pathway is plant hormone metabolism; auxin biosynthesis. Its function is as follows. Hydrolyzes indole-3-acetamide (IAM) into indole-3-acetic acid (IAA). The polypeptide is Indoleacetamide hydrolase (iaaH) (Pseudomonas syringae pv. syringae).